The chain runs to 157 residues: Small ribosomal subunit protein uS7 (157 aa).

The protein belongs to the universal ribosomal protein uS7 family. Part of the 30S ribosomal subunit. Contacts proteins S9 and S11.

One of the primary rRNA binding proteins, it binds directly to 16S rRNA where it nucleates assembly of the head domain of the 30S subunit. Is located at the subunit interface close to the decoding center, probably blocks exit of the E-site tRNA. In Phenylobacterium zucineum (strain HLK1), this protein is Small ribosomal subunit protein uS7.